We begin with the raw amino-acid sequence, 156 residues long: Small ribosomal subunit protein uS7 (156 aa).

This sequence belongs to the universal ribosomal protein uS7 family. Part of the 30S ribosomal subunit. Contacts proteins S9 and S11.

One of the primary rRNA binding proteins, it binds directly to 16S rRNA where it nucleates assembly of the head domain of the 30S subunit. Is located at the subunit interface close to the decoding center, probably blocks exit of the E-site tRNA. In Deinococcus radiodurans (strain ATCC 13939 / DSM 20539 / JCM 16871 / CCUG 27074 / LMG 4051 / NBRC 15346 / NCIMB 9279 / VKM B-1422 / R1), this protein is Small ribosomal subunit protein uS7.